The primary structure comprises 443 residues: Phosphoglucosamine mutase (443 aa).

Ser-101 functions as the Phosphoserine intermediate in the catalytic mechanism. Mg(2+) contacts are provided by Ser-101, Asp-239, Asp-241, and Asp-243. Phosphoserine is present on Ser-101.

This sequence belongs to the phosphohexose mutase family. The cofactor is Mg(2+). Activated by phosphorylation.

It carries out the reaction alpha-D-glucosamine 1-phosphate = D-glucosamine 6-phosphate. Functionally, catalyzes the conversion of glucosamine-6-phosphate to glucosamine-1-phosphate. This chain is Phosphoglucosamine mutase, found in Francisella tularensis subsp. holarctica (strain FTNF002-00 / FTA).